Here is a 183-residue protein sequence, read N- to C-terminus: Glutathione-regulated potassium-efflux system ancillary protein KefG (183 aa).

Belongs to the NAD(P)H dehydrogenase (quinone) family. KefG subfamily. As to quaternary structure, interacts with KefB.

Its subcellular location is the cell inner membrane. The catalysed reaction is a quinone + NADH + H(+) = a quinol + NAD(+). It carries out the reaction a quinone + NADPH + H(+) = a quinol + NADP(+). Regulatory subunit of a potassium efflux system that confers protection against electrophiles. Required for full activity of KefB. This chain is Glutathione-regulated potassium-efflux system ancillary protein KefG, found in Salmonella gallinarum (strain 287/91 / NCTC 13346).